Reading from the N-terminus, the 983-residue chain is MRPAALLLLPSLLALLVHGLSLEAPTEGEGQAPGLEEMDGELTAAPTPEQPEPGVHFVTTAPTLKLLNHHPLLEEFLQEGQEKDELRPDPPTASPLPRLANQDSRPVFTSPTPVMVAAPTQPQSREGPWSLESEPPALRITVALPPGPGMAVPTPGPGERPNTPPPSGAWTPTPEGPGDIGRPWAPGVMSQTTGLGMEGTVATSTASGDDEETTSTSTIITTAVTTVQPPGPCSWNFSGPEGSLDSPTASNSPPDVGLDCFYYISVYPGYGVEIKVQNISLREGETVTVEGLGGPDPLPLANQSFLLRGQVIRSPTHQAALRFQSLPPPAGPGTFHFHYQAYLLSCHFPRRPAYGAVTVTSLHPGGSARFRCATGYQLKGARLLTCLNATQPFWDSQEPVCIAACGGVIRNATTGRIVSPGFPGNYSNNLTCHWLLEAPEGQRLHLHFEKVSLAEDDDRLIIRNGDNVEAPPVYDSYEVEYLPIEGLLSSSRHFFVELSTDSSGVAAGMALRYEAFQQGHCYEPFVKYGNFSSSAPSYPVGTTVEFSCDPGYTLEQGSIIIECVDPHDPQWNETEPACRAVCSGETTDSAGVVLSPNWPEPYGRGQDCIWGVHVEEDKRIMLDVRVLRIGTGDVLTFYDGDDLTARVLGQYSGPRGHFKLFTSMADVTIQFQSDPGASVLGYQQGFVIHFFEVPRNDTCPELPEIPNGWKSPSQPELVHGTVVTYQCYPGYQVVGSSVLMCQWDLTWSEDLPSCQRVTSCLDPGDVEHSRRLISSPKFPVGATVQYICDQGFVLTGSALLTCHDRQASSPKWSDRTPKCLLEQLKPCHGLSAPENGARSPEKRLHPAGATVHFSCAPGYVLKGQASIKCVPGHPSHWSDPPPICRAASLDGFYSGRSLDVAKVPAASSTLDAAHLAAAIFLPLVAMALLVGGVYLYFCRLQGNSPLQLPRTRPRPYDRITVESAFDNPTYETGSLSFAGDERI.

Positions M1–G19 are cleaved as a signal peptide. Disordered stretches follow at residues G80 to E132 and P148 to G194. The span at N101–T112 shows a compositional bias: polar residues. The span at T154–S167 shows a compositional bias: pro residues. N-linked (GlcNAc...) asparagine glycosylation is present at N278. One can recognise a Sushi 1 domain in the interval L344 to A403. Intrachain disulfides connect C346–C386, C372–C401, C405–C432, C521–C563, C548–C578, C582–C608, C699–C741, C727–C754, C760–C802, C788–C819, C827–C869, and C855–C884. N-linked (GlcNAc...) asparagine glycosylation is found at N388, N425, and N530. Positions C405–F516 constitute a CUB 1 domain. In terms of domain architecture, Sushi 2 spans G519–A580. One can recognise a CUB 2 domain in the interval C582 to V693. 3 consecutive Sushi domains span residues D697 to R756, T758 to L821, and K825 to A886. A helical membrane pass occupies residues L915–L935.

It belongs to the SEZ6 family.

The protein localises to the cell membrane. In terms of biological role, may play a role in cell-cell recognition and in neuronal membrane signaling. Seems to be important for the achievement of the necessary balance between dendrite elongation and branching during the elaboration of a complex dendritic arbor. Involved in the development of appropriate excitatory synaptic connectivity. This chain is Seizure protein 6 homolog (SEZ6), found in Bos taurus (Bovine).